A 528-amino-acid polypeptide reads, in one-letter code: MPVTMSRAFLDNFLGNSPKWFKIAIISFLVINPIVFYFNPFVAGWLLVVEFIFTLAMALKCYPLQPGGLLAIEAVAIGMTSPSQVLHEIEANLEVVLLLVFMVAGIYFMKQLLLFVFTKMITKVRSKIYVSLLFCISSAFLSAFLDALTVIAVIITVAVGFYSIYHKVASGKTFGESHDHTSDGYPQLCEEELESFRGFLRNLLMHAGVGTALGGVCTMVGEPQNLIIAAQANWQFAEFAIRMSPVTVPVFFAGITTCFLVEKFKVFGYGQQLPDAVHKILSDYDAHEDANRTKHDKVKLLIQAVIGVWLIAGLALHLASVGLIGLSVIILATAFNGITNEHALGKAFEEALPFTALLAVFFAIVAVIIDQQLFAPVIQWALSYEGNTQLVIFYIANGLLSMVSDNVFVGTVYINEVKSALLNGQITRDQFDLLAVAINTGTNLPSVATPNGQAAFLFLLTSAIAPLIRLSYGRMVWMALPYTIVLSIVGVLAIQLGALEQMTQYFYDSQMLIHHSAQAAADGVVSSH.

Helical transmembrane passes span 20–39 (WFKI…FYFN), 66–86 (PGGL…SQVL), 97–117 (LLLV…LFVF), 139–159 (AFLS…TVAV), 241–261 (IRMS…CFLV), 304–324 (AVIG…VGLI), 349–369 (EEAL…AVII), 390–410 (LVIF…VFVG), 448–468 (ATPN…APLI), and 476–496 (VWMA…AIQL).

The protein belongs to the NhaB Na(+)/H(+) (TC 2.A.34) antiporter family.

It is found in the cell inner membrane. It carries out the reaction 2 Na(+)(in) + 3 H(+)(out) = 2 Na(+)(out) + 3 H(+)(in). In terms of biological role, na(+)/H(+) antiporter that extrudes sodium in exchange for external protons. This chain is Na(+)/H(+) antiporter NhaB, found in Shewanella pealeana (strain ATCC 700345 / ANG-SQ1).